Reading from the N-terminus, the 100-residue chain is NADH-quinone oxidoreductase subunit K (100 aa).

3 helical membrane-spanning segments follow: residues 4-24 (LQHG…GLVI), 28-48 (LLFM…AFVV), and 60-80 (VMYI…LALL).

This sequence belongs to the complex I subunit 4L family. NDH-1 is composed of 13 different subunits. Subunits NuoA, H, J, K, L, M, N constitute the membrane sector of the complex.

It is found in the cell inner membrane. The catalysed reaction is a quinone + NADH + 5 H(+)(in) = a quinol + NAD(+) + 4 H(+)(out). Functionally, NDH-1 shuttles electrons from NADH, via FMN and iron-sulfur (Fe-S) centers, to quinones in the respiratory chain. The immediate electron acceptor for the enzyme in this species is believed to be ubiquinone. Couples the redox reaction to proton translocation (for every two electrons transferred, four hydrogen ions are translocated across the cytoplasmic membrane), and thus conserves the redox energy in a proton gradient. The sequence is that of NADH-quinone oxidoreductase subunit K from Citrobacter koseri (strain ATCC BAA-895 / CDC 4225-83 / SGSC4696).